A 492-amino-acid chain; its full sequence is Adenosylhomocysteinase-like 2 (492 aa).

Positions 43–64 (FTGSSDEEDVSPKDNHQRNSAG) are disordered. Positions 192 and 217 each coordinate substrate. 218–220 (SVT) is a binding site for NAD(+). Substrate is bound by residues Lys247 and Asp251. NAD(+) is bound by residues 283 to 288 (GDVGKG), Glu304, 360 to 362 (MGH), Asn407, Lys486, 486 to 490 (KANYY), and Tyr490.

This sequence belongs to the adenosylhomocysteinase family. Requires NAD(+) as cofactor.

Its function is as follows. Might play a role in the regulation of methionine metabolism. The protein is Adenosylhomocysteinase-like 2 of Drosophila melanogaster (Fruit fly).